The sequence spans 29 residues: Galanin (29 aa).

At A29 the chain carries Alanine amide.

The protein belongs to the galanin family.

The protein resides in the secreted. Contracts smooth muscle of the gastrointestinal and genitourinary tract, regulates growth hormone release, modulates insulin release, and may be involved in the control of adrenal secretion. In Ovis aries (Sheep), this protein is Galanin (GAL).